The following is a 466-amino-acid chain: Cysteine--tRNA ligase (466 aa).

C28 is a Zn(2+) binding site. The 'HIGH' region signature appears at 30-40 (PTVYNYIHIGN). Zn(2+)-binding residues include C208, H233, and E237. Positions 265-269 (KMSKS) match the 'KMSKS' region motif. ATP is bound at residue K268. The residue at position 269 (S269) is a Phosphoserine.

It belongs to the class-I aminoacyl-tRNA synthetase family. Monomer. Zn(2+) is required as a cofactor.

The protein localises to the cytoplasm. The catalysed reaction is tRNA(Cys) + L-cysteine + ATP = L-cysteinyl-tRNA(Cys) + AMP + diphosphate. The protein is Cysteine--tRNA ligase of Shouchella clausii (strain KSM-K16) (Alkalihalobacillus clausii).